Here is a 78-residue protein sequence, read N- to C-terminus: UPF0335 protein RPR_04100 (78 aa).

This sequence belongs to the UPF0335 family.

The polypeptide is UPF0335 protein RPR_04100 (Rickettsia peacockii (strain Rustic)).